We begin with the raw amino-acid sequence, 245 residues long: tRNA pseudouridine synthase A (245 aa).

Asp52 functions as the Nucleophile in the catalytic mechanism. Residue Tyr110 participates in substrate binding.

This sequence belongs to the tRNA pseudouridine synthase TruA family. Homodimer.

It catalyses the reaction uridine(38/39/40) in tRNA = pseudouridine(38/39/40) in tRNA. Formation of pseudouridine at positions 38, 39 and 40 in the anticodon stem and loop of transfer RNAs. The sequence is that of tRNA pseudouridine synthase A from Ruminiclostridium cellulolyticum (strain ATCC 35319 / DSM 5812 / JCM 6584 / H10) (Clostridium cellulolyticum).